We begin with the raw amino-acid sequence, 521 residues long: RING-type E3 ubiquitin-protein ligase PPIL2 (521 aa).

A U-box domain is found at 35–108; that stretch reads RRLPFDHCSL…GQYHCPVLYS (74 aa). A coiled-coil region spans residues 197 to 217; that stretch reads LKNTNSETRETLQELYKEFKG. A Glycyl lysine isopeptide (Lys-Gly) (interchain with G-Cter in SUMO2) cross-link involves residue Lys216. One can recognise a PPIase cyclophilin-type domain in the interval 278–433; the sequence is KKGYVRLHTN…EEVLICTTTV (156 aa). Positions 447–462 are enriched in basic and acidic residues; it reads QERKKTQHQVDPEAKV. A disordered region spans residues 447–521; sequence QERKKTQHQV…SRGFGDFSSW (75 aa). Positions 465 to 478 are enriched in polar residues; the sequence is SQPQPGNQGPQTYR. An N6-acetyllysine modification is found at Lys483.

It belongs to the cyclophilin-type PPIase family. PPIL2 subfamily. In terms of assembly, component of the minor spliceosome, which splices U12-type introns. Within this complex, interacts with PRPF8/PRP8, EFTUD2/SNU114 and PLRG1. Interacts with isoform 2 of BSG. Interacts (via the PPIase cyclophilin-type domain) with CRNKL1; they may form a trimeric complex with HSP90.

The protein resides in the nucleus. The enzyme catalyses S-ubiquitinyl-[E2 ubiquitin-conjugating enzyme]-L-cysteine + [acceptor protein]-L-lysine = [E2 ubiquitin-conjugating enzyme]-L-cysteine + N(6)-ubiquitinyl-[acceptor protein]-L-lysine.. The protein operates within protein modification; protein ubiquitination. Has a ubiquitin-protein ligase activity acting as an E3 ubiquitin protein ligase or as an ubiquitin-ubiquitin ligase promoting elongation of ubiquitin chains on substrates. By mediating 'Lys-48'-linked polyubiquitination of proteins could target them for proteasomal degradation. May also function as a chaperone, playing a role in transport to the cell membrane of BSG/Basigin for instance. Probable inactive PPIase with no peptidyl-prolyl cis-trans isomerase activity. As a component of the minor spliceosome, involved in the splicing of U12-type introns in pre-mRNAs. The chain is RING-type E3 ubiquitin-protein ligase PPIL2 from Mus musculus (Mouse).